Consider the following 314-residue polypeptide: Malate dehydrogenase (314 aa).

NAD(+)-binding positions include 12–17 (GSGFTG) and Asp-36. The substrate site is built by Arg-87 and Arg-93. NAD(+)-binding positions include Asn-100 and 123–125 (LTN). Asn-125 lines the substrate pocket. Residue Ser-149 is modified to Phosphoserine. Position 156 (Arg-156) interacts with substrate. His-180 acts as the Proton acceptor in catalysis.

This sequence belongs to the LDH/MDH superfamily. MDH type 3 family.

It catalyses the reaction (S)-malate + NAD(+) = oxaloacetate + NADH + H(+). In terms of biological role, catalyzes the reversible oxidation of malate to oxaloacetate. In Shouchella clausii (strain KSM-K16) (Alkalihalobacillus clausii), this protein is Malate dehydrogenase.